The following is a 230-amino-acid chain: DNA repair protein RecO (230 aa).

It belongs to the RecO family.

Its function is as follows. Involved in DNA repair and RecF pathway recombination. The polypeptide is DNA repair protein RecO (Pseudoalteromonas translucida (strain TAC 125)).